Here is a 714-residue protein sequence, read N- to C-terminus: Lipase maturation factor 2 (714 aa).

9 helical membrane-spanning segments follow: residues 11 to 31 (LFLA…YLQI), 79 to 99 (MELL…CAPL), 103 to 125 (LLFA…FLYF), 159 to 179 (SVTF…SGVV), 221 to 241 (FSVV…FMPI), 257 to 277 (ILII…VLAF), 304 to 324 (TLLS…LLYW), 358 to 378 (VTLP…LSAL), and 398 to 418 (AVFA…FTYI). Asparagine 483 carries an N-linked (GlcNAc...) asparagine glycan. The chain crosses the membrane as a helical span at residues 629 to 649 (PFSPHVVLWSLYVVAATTCLL). Over residues 654-669 (RRPRGGAPPTRHKAPK) the composition is skewed to basic residues. The interval 654–714 (RRPRGGAPPT…EGPRGTKRRK (61 aa)) is disordered. Residues 683–708 (RRKEGREAEERGEGRSRGAADGEGPR) are compositionally biased toward basic and acidic residues.

Belongs to the lipase maturation factor family.

Its subcellular location is the endoplasmic reticulum membrane. Involved in the maturation of specific proteins in the endoplasmic reticulum. May be required for maturation and transport of active lipoprotein lipase (LPL) through the secretory pathway. This is Lipase maturation factor 2 (LMF2) from Gallus gallus (Chicken).